We begin with the raw amino-acid sequence, 244 residues long: Probable transcriptional regulatory protein TT_C0469 (244 aa).

The protein belongs to the TACO1 family.

It localises to the cytoplasm. The sequence is that of Probable transcriptional regulatory protein TT_C0469 from Thermus thermophilus (strain ATCC BAA-163 / DSM 7039 / HB27).